The chain runs to 756 residues: Cilium assembly protein DZIP1L (756 aa).

Residues 1 to 20 (MLGQFSPGEPYTTSLSSTPP) form a disordered region. The span at 10–19 (PYTTSLSSTP) shows a compositional bias: low complexity. Residues 108-158 (DFLSSQLAGLEERLQAATSLVQQGEGQRAELEKSLQETKQENRRRKQLIAT) adopt a coiled-coil conformation. The C2H2-type zinc-finger motif lies at 171–194 (HKCQFCEKSFVNYSYLQAHVQRRH). 4 stretches are compositionally biased toward basic and acidic residues: residues 193-202 (RHPEVTDAEK), 237-262 (NLRRQQEQEQQRRREQSEKEALERWK), 319-335 (DPEKEMRENRERELRER), and 344-365 (RRKFQEAQKRHQQENKELKSEN). Disordered stretches follow at residues 193–212 (RHPEVTDAEKQKKRKVEEME), 233–262 (QQADNLRRQQEQEQQRRREQSEKEALERWK), 310–365 (NNAS…KSEN), 409–466 (KIKK…MRES), 531–626 (VKSL…AYIT), and 693–756 (IKTP…GTSA). Coiled coils occupy residues 196–283 (EVTD…FLQE) and 321–416 (EKEM…LSAT). The span at 534-558 (LQKSSGKPTPNTLKQRGKKTSTPLN) shows a compositional bias: polar residues. Over residues 560 to 578 (KSLRFRQDSKASDRREKSQ) the composition is skewed to basic and acidic residues. The span at 586–598 (TPTPRSKAPPPNQ) shows a compositional bias: pro residues.

The protein belongs to the DZIP C2H2-type zinc-finger protein family.

It localises to the cytoplasm. Its subcellular location is the cytoskeleton. The protein localises to the cilium basal body. The protein resides in the microtubule organizing center. It is found in the centrosome. It localises to the centriole. Its function is as follows. Involved in primary cilium formation. Probably acts as a transition zone protein required for localization of PKD1/PC1 and PKD2/PC2 to the ciliary membrane. In Danio rerio (Zebrafish), this protein is Cilium assembly protein DZIP1L (dzip1l).